The primary structure comprises 212 residues: 3,4-dihydroxy-2-butanone 4-phosphate synthase (212 aa).

D-ribulose 5-phosphate-binding positions include 37–38 (RE), D42, 150–154 (RRGHT), and E174. Position 38 (E38) interacts with Mg(2+). H153 is a binding site for Mg(2+).

The protein belongs to the DHBP synthase family. As to quaternary structure, homodimer. The cofactor is Mg(2+). Mn(2+) serves as cofactor.

The catalysed reaction is D-ribulose 5-phosphate = (2S)-2-hydroxy-3-oxobutyl phosphate + formate + H(+). The protein operates within cofactor biosynthesis; riboflavin biosynthesis; 2-hydroxy-3-oxobutyl phosphate from D-ribulose 5-phosphate: step 1/1. Catalyzes the conversion of D-ribulose 5-phosphate to formate and 3,4-dihydroxy-2-butanone 4-phosphate. The sequence is that of 3,4-dihydroxy-2-butanone 4-phosphate synthase from Shewanella pealeana (strain ATCC 700345 / ANG-SQ1).